The chain runs to 24 residues: Brevinin-1SPc (24 aa).

A disulfide bond links Cys18 and Cys24.

As to expression, expressed by the skin glands.

The protein resides in the secreted. In terms of biological role, antimicrobial peptide with activity against Gram-negative and Gram-positive bacteria and fungi. Also shows hemolytic activity. This Lithobates septentrionalis (Mink frog) protein is Brevinin-1SPc.